The primary structure comprises 501 residues: Endosomal/lysosomal proton channel TMEM175 (501 aa).

The disordered stretch occupies residues 1 to 20; sequence MAAPRAATPGPGGGARKPEL. Residues 1–31 are Cytoplasmic-facing; sequence MAAPRAATPGPGGGARKPELDLELGSSTQTS. The helical transmembrane segment at 32-54 threads the bilayer; sequence HRLLAYSDALLSIIATVMILPVA. The RxxxFSD motif 1 motif lies at 33–39; it reads RLLAYSD. Topologically, residues 55 to 75 are lumenal; that stretch reads HTKIHPDQKLGESVQQLLLTK. Residues 56–61 form a short helix H1-1 region; the sequence is TKIHPD. The tract at residues 63-69 is short helix H2-1; sequence KLGESVQ. The helical transmembrane segment at 76–98 threads the bilayer; it reads IAVYLMTFLIVTVAWAAHVRLFQ. The Cytoplasmic portion of the chain corresponds to 99–104; it reads VIELID. A helical transmembrane segment spans residues 105–126; that stretch reads DVLALLNLACMMIITFLPYTFS. Topologically, residues 127–136 are lumenal; sequence LMASFPGVPF. Residues 137–158 traverse the membrane as a helical segment; it reads GIFLFSVCAVVIGLIQAVIVVY. The Cytoplasmic segment spans residues 159–182; sequence GFYHPHLLNQQIQVSENQNFYKRH. The helical transmembrane segment at 183–203 threads the bilayer; that stretch reads ILKIILRGPALCFLAAIFSFF. Topologically, residues 204–208 are lumenal; it reads FIPLS. A helical membrane pass occupies residues 209-228; that stretch reads YLLLGLVIVFPHLSRFITWC. Topologically, residues 229 to 257 are cytoplasmic; sequence KTKIVGHRDEEEASYSLETFSFYLSEPLS. The helical transmembrane segment at 258–282 threads the bilayer; sequence KERVEAFSDGVYAIVATLLILDICE. The RxxxFSD motif 2 motif lies at 260 to 266; it reads RVEAFSD. Topologically, residues 283–309 are lumenal; that stretch reads DNVPDPREVGEKFHGSLLEALSEYGPN. The interval 288–296 is short helix H1-2; the sequence is PREVGEKFH. Residues 298 to 304 form a short helix H2-2 region; sequence SLLEALS. The chain crosses the membrane as a helical span at residues 310-332; the sequence is YLAYFGSFVTIGLLWFVHHSLFL. Over 333-338 the chain is Cytoplasmic; sequence YVTKAT. The helical transmembrane segment at 339–360 threads the bilayer; it reads RLMGLLNILSLAFIGGLPLAYQ. The Lumenal segment spans residues 361 to 375; it reads LTSEFAEKSHNEIEA. Residues 376–396 traverse the membrane as a helical segment; the sequence is IQVSCVITFFASIFQFAIWTT. The Cytoplasmic portion of the chain corresponds to 397 to 416; the sequence is ALLHERETLHPFARYGGKEH. A helical transmembrane segment spans residues 417–440; sequence AFMFAKLALYPCVSLGAFFLTCLL. Residues 441 to 442 lie on the Lumenal side of the membrane; it reads SE. A helical transmembrane segment spans residues 443 to 469; it reads FSTEIFHLMQIVIPFAFLALRIFVRIS. Topologically, residues 470–501 are cytoplasmic; it reads LTVIKSVMSLSRRKVVLLEEEEACLSPTETHS.

It belongs to the TMEM175 family. As to quaternary structure, homodimer.

It localises to the endosome membrane. It is found in the lysosome membrane. The enzyme catalyses H(+)(in) = H(+)(out). The catalysed reaction is K(+)(in) = K(+)(out). Its activity is regulated as follows. Active at low pH (under pH 4.6): proton channel activity is activated by luminal side protons. Polyunsaturated fatty acids, such as arachidonic acid, also activate the channel activity. Functionally, proton-activated proton channel that catalyzes proton efflux from endosomes and lysosomes to maintain a steady-state pH. Activated at low pH (under pH 4.6) by luminal side protons: selectively mediates lysosomal proton release from lysosomes, eliciting a proton leak that balances V-ATPase activity to maintain pH homeostasis. Regulation of lumenal pH stability is required for autophagosome-lysosome fusion. Also acts as a potassium channel at higher pH, regulating potassium conductance in endosomes and lysosomes. The polypeptide is Endosomal/lysosomal proton channel TMEM175 (Gallus gallus (Chicken)).